The following is a 476-amino-acid chain: Ribulose bisphosphate carboxylase large chain (476 aa).

Positions 1 to 2 (MS) are excised as a propeptide. Position 3 is an N-acetylproline (Pro3). Lys14 is subject to N6,N6,N6-trimethyllysine. Substrate-binding residues include Asn123 and Thr173. Lys175 functions as the Proton acceptor in the catalytic mechanism. Lys177 provides a ligand contact to substrate. Mg(2+) is bound by residues Lys201, Asp203, and Glu204. Lys201 bears the N6-carboxylysine mark. His294 functions as the Proton acceptor in the catalytic mechanism. Substrate is bound by residues Arg295, His327, and Ser379.

Belongs to the RuBisCO large chain family. Type I subfamily. Heterohexadecamer of 8 large chains and 8 small chains; disulfide-linked. The disulfide link is formed within the large subunit homodimers. It depends on Mg(2+) as a cofactor. Post-translationally, the disulfide bond which can form in the large chain dimeric partners within the hexadecamer appears to be associated with oxidative stress and protein turnover.

It localises to the plastid. Its subcellular location is the chloroplast. It carries out the reaction 2 (2R)-3-phosphoglycerate + 2 H(+) = D-ribulose 1,5-bisphosphate + CO2 + H2O. The enzyme catalyses D-ribulose 1,5-bisphosphate + O2 = 2-phosphoglycolate + (2R)-3-phosphoglycerate + 2 H(+). Its function is as follows. RuBisCO catalyzes two reactions: the carboxylation of D-ribulose 1,5-bisphosphate, the primary event in carbon dioxide fixation, as well as the oxidative fragmentation of the pentose substrate in the photorespiration process. Both reactions occur simultaneously and in competition at the same active site. The protein is Ribulose bisphosphate carboxylase large chain of Brachypodium distachyon (Purple false brome).